Here is a 188-residue protein sequence, read N- to C-terminus: Elongation factor P 1 (188 aa).

It belongs to the elongation factor P family.

Its subcellular location is the cytoplasm. Its pathway is protein biosynthesis; polypeptide chain elongation. In terms of biological role, involved in peptide bond synthesis. Stimulates efficient translation and peptide-bond synthesis on native or reconstituted 70S ribosomes in vitro. Probably functions indirectly by altering the affinity of the ribosome for aminoacyl-tRNA, thus increasing their reactivity as acceptors for peptidyl transferase. This is Elongation factor P 1 (efp1) from Porphyromonas gingivalis (strain ATCC BAA-308 / W83).